A 55-amino-acid chain; its full sequence is Large ribosomal subunit protein bL33 (55 aa).

It belongs to the bacterial ribosomal protein bL33 family.

The polypeptide is Large ribosomal subunit protein bL33 (Xanthomonas axonopodis pv. citri (strain 306)).